The primary structure comprises 798 residues: Phenylalanine--tRNA ligase beta subunit (798 aa).

The tRNA-binding domain maps to 38–148; sequence IGNYEKVVVG…PEAPVGEKIE (111 aa). The region spanning 400–475 is the B5 domain; sequence FTPKVIAVSL…RYLGYNNFPD (76 aa). Residues Asp-453, Asp-459, Glu-462, and Glu-463 each coordinate Mg(2+). Residues 703-796 enclose the FDX-ACB domain; the sequence is SPYPEVKRDI…LEAKTGAKLR (94 aa).

Belongs to the phenylalanyl-tRNA synthetase beta subunit family. Type 1 subfamily. In terms of assembly, tetramer of two alpha and two beta subunits. Mg(2+) is required as a cofactor.

It is found in the cytoplasm. The enzyme catalyses tRNA(Phe) + L-phenylalanine + ATP = L-phenylalanyl-tRNA(Phe) + AMP + diphosphate + H(+). The sequence is that of Phenylalanine--tRNA ligase beta subunit from Carboxydothermus hydrogenoformans (strain ATCC BAA-161 / DSM 6008 / Z-2901).